Reading from the N-terminus, the 347-residue chain is Anthranilate phosphoribosyltransferase (347 aa).

Residues Gly88, 91-92 (GD), Thr96, 98-101 (NIST), 116-124 (KHGGRSVSS), and Ser128 each bind 5-phospho-alpha-D-ribose 1-diphosphate. Position 88 (Gly88) interacts with anthranilate. Ser100 lines the Mg(2+) pocket. Arg174 lines the anthranilate pocket. Residues Asp233 and Glu234 each contribute to the Mg(2+) site.

This sequence belongs to the anthranilate phosphoribosyltransferase family. In terms of assembly, homodimer. Requires Mg(2+) as cofactor.

The enzyme catalyses N-(5-phospho-beta-D-ribosyl)anthranilate + diphosphate = 5-phospho-alpha-D-ribose 1-diphosphate + anthranilate. It functions in the pathway amino-acid biosynthesis; L-tryptophan biosynthesis; L-tryptophan from chorismate: step 2/5. In terms of biological role, catalyzes the transfer of the phosphoribosyl group of 5-phosphorylribose-1-pyrophosphate (PRPP) to anthranilate to yield N-(5'-phosphoribosyl)-anthranilate (PRA). In Polaromonas sp. (strain JS666 / ATCC BAA-500), this protein is Anthranilate phosphoribosyltransferase.